The sequence spans 45 residues: Putative UPF0377 protein YJL222W-B (45 aa).

It belongs to the UPF0377 family.

The sequence is that of Putative UPF0377 protein YJL222W-B from Saccharomyces cerevisiae (strain ATCC 204508 / S288c) (Baker's yeast).